Consider the following 101-residue polypeptide: Small ribosomal subunit protein uS14 (101 aa).

It belongs to the universal ribosomal protein uS14 family. Part of the 30S ribosomal subunit. Contacts proteins S3 and S10.

Functionally, binds 16S rRNA, required for the assembly of 30S particles and may also be responsible for determining the conformation of the 16S rRNA at the A site. The protein is Small ribosomal subunit protein uS14 of Hahella chejuensis (strain KCTC 2396).